We begin with the raw amino-acid sequence, 618 residues long: Leucine aminopeptidase 2 (618 aa).

A peptide contacts are provided by residues 139–141 and 271–276; these read QCQ and PYGGME. A Zn(2+)-binding site is contributed by His-300. Glu-301 acts as the Proton acceptor in catalysis. Residues His-304 and Glu-323 each coordinate Zn(2+). The active-site Proton donor is Tyr-389.

It belongs to the peptidase M1 family. Requires Zn(2+) as cofactor.

The protein resides in the cytoplasm. Its subcellular location is the nucleus. It carries out the reaction an epoxide + H2O = an ethanediol. Functionally, aminopeptidase that preferentially cleaves di- and tripeptides. Also has low epoxide hydrolase activity (in vitro). Can hydrolyze the epoxide leukotriene LTA(4) but it forms preferentially 5,6-dihydroxy-7,9,11,14-eicosatetraenoic acid rather than the cytokine leukotriene B(4) as the product compared to the homologous mammalian enzyme (in vitro). The sequence is that of Leucine aminopeptidase 2 from Aspergillus clavatus (strain ATCC 1007 / CBS 513.65 / DSM 816 / NCTC 3887 / NRRL 1 / QM 1276 / 107).